The following is a 242-amino-acid chain: DnaJ homolog subfamily B member 3 (242 aa).

One can recognise a J domain in the interval 1–69; that stretch reads MVDYYEVLGV…RKREVYDRCG (69 aa).

As to expression, testis specific. Expression is confined to the germline without any contribution of the somatic components.

Its function is as follows. May operate as a co-chaperone of the male germ cell- and haploid stage-specific Hsp70 proteins. The polypeptide is DnaJ homolog subfamily B member 3 (Dnajb3) (Mus musculus (Mouse)).